The primary structure comprises 955 residues: Isoleucine--tRNA ligase (955 aa).

The short motif at 58–68 (IYANGDIHIGH) is the 'HIGH' region element. Glutamate 552 serves as a coordination point for L-isoleucyl-5'-AMP. The short motif at 593–597 (KMSKS) is the 'KMSKS' region element. Position 596 (lysine 596) interacts with ATP. Positions 918, 921, 938, and 941 each coordinate Zn(2+).

This sequence belongs to the class-I aminoacyl-tRNA synthetase family. IleS type 1 subfamily. As to quaternary structure, monomer. Zn(2+) is required as a cofactor.

The protein localises to the cytoplasm. It carries out the reaction tRNA(Ile) + L-isoleucine + ATP = L-isoleucyl-tRNA(Ile) + AMP + diphosphate. Catalyzes the attachment of isoleucine to tRNA(Ile). As IleRS can inadvertently accommodate and process structurally similar amino acids such as valine, to avoid such errors it has two additional distinct tRNA(Ile)-dependent editing activities. One activity is designated as 'pretransfer' editing and involves the hydrolysis of activated Val-AMP. The other activity is designated 'posttransfer' editing and involves deacylation of mischarged Val-tRNA(Ile). This is Isoleucine--tRNA ligase from Vesicomyosocius okutanii subsp. Calyptogena okutanii (strain HA).